The primary structure comprises 181 residues: MASQIRHNYHEDCEPINKQINLEFYASYVYMSMGHYFDRDDISLPGASKFFKDSSDEEREHGQKLMKYQNKRGARIVLQAIAAPSLQEWGNLHDALQAALDLENEVNQSLLDLDATASKINDPHLTNMLEGEFLEEQVESIEKIGNLITRLKRAGTSGLGEFLFDKELKQRFLPSLTSHPN.

The Ferritin-like diiron domain maps to 6–155 (RHNYHEDCEP…NLITRLKRAG (150 aa)). Positions 23, 58, 61, 103, and 137 each coordinate Fe cation.

This sequence belongs to the ferritin family. In terms of assembly, oligomer of 12 or 24 subunits. The functional molecule is roughly spherical and contains a central cavity into which the polymeric mineral iron core is deposited. In terms of processing, the N-terminus is blocked.

It is found in the cytoplasm. It catalyses the reaction 4 Fe(2+) + O2 + 4 H(+) = 4 Fe(3+) + 2 H2O. In terms of biological role, stores iron in a soluble, non-toxic, readily available form. Important for iron homeostasis. Has ferroxidase activity. Iron is taken up in the ferrous form and deposited as ferric hydroxides after oxidation. The protein is Ferritin of Pacifastacus leniusculus (Signal crayfish).